The sequence spans 423 residues: Phytoene synthase, chloroplastic (423 aa).

The transit peptide at 1–136 (MVVAILRVVS…DAYDRCGEVC (136 aa)) directs the protein to the chloroplast.

The protein belongs to the phytoene/squalene synthase family. Monomer.

Its subcellular location is the plastid. It is found in the chloroplast. It catalyses the reaction 2 (2E,6E,10E)-geranylgeranyl diphosphate = 15-cis-phytoene + 2 diphosphate. Its pathway is carotenoid biosynthesis; phytoene biosynthesis; all-trans-phytoene from geranylgeranyl diphosphate: step 1/1. In terms of biological role, catalyzes the reaction from prephytoene diphosphate to phytoene. The protein is Phytoene synthase, chloroplastic (PSY) of Narcissus pseudonarcissus (Daffodil).